The chain runs to 267 residues: Hydroxyethylthiazole kinase (267 aa).

M46 contributes to the substrate binding site. Residues R122 and S168 each coordinate ATP. G195 contacts substrate.

Belongs to the Thz kinase family. Mg(2+) is required as a cofactor.

The enzyme catalyses 5-(2-hydroxyethyl)-4-methylthiazole + ATP = 4-methyl-5-(2-phosphooxyethyl)-thiazole + ADP + H(+). It participates in cofactor biosynthesis; thiamine diphosphate biosynthesis; 4-methyl-5-(2-phosphoethyl)-thiazole from 5-(2-hydroxyethyl)-4-methylthiazole: step 1/1. Functionally, catalyzes the phosphorylation of the hydroxyl group of 4-methyl-5-beta-hydroxyethylthiazole (THZ). This is Hydroxyethylthiazole kinase from Nitratidesulfovibrio vulgaris (strain ATCC 29579 / DSM 644 / CCUG 34227 / NCIMB 8303 / VKM B-1760 / Hildenborough) (Desulfovibrio vulgaris).